The following is a 178-amino-acid chain: Signal peptidase complex subunit 2 (178 aa).

Residues 1 to 37 (MSSAKPINVYSIPELNQALDEALPSVFARLNYERSYA) lie on the Cytoplasmic side of the membrane. Residues 38–58 (LLDAKLYIGYSIAVVAGLSFF) form a helical membrane-spanning segment. The Lumenal segment spans residues 59 to 67 (LDKKFERDQ). The chain crosses the membrane as a helical span at residues 68-88 (IVTYQKLLVGAYFVLSLLFWY). Topologically, residues 89–178 (FSRFIEKGTV…HNVLDTKKNE (90 aa)) are cytoplasmic.

This sequence belongs to the SPCS2 family. Component of the signal peptidase complex (SPC) composed of a catalytic subunit SEC11 and three accessory subunits SPC1, SPC2 and SPC3. The complex induces a local thinning of the ER membrane which is used to measure the length of the signal peptide (SP) h-region of protein substrates. This ensures the selectivity of the complex towards h-regions shorter than 18-20 amino acids. SPC associates with the translocon complex. Interacts with SBH1 and SEB2/SBH2.

It is found in the endoplasmic reticulum membrane. Component of the signal peptidase complex (SPC) which catalyzes the cleavage of N-terminal signal sequences from nascent proteins as they are translocated into the lumen of the endoplasmic reticulum. Enhances the enzymatic activity of SPC and facilitates the interactions between different components of the translocation site. The chain is Signal peptidase complex subunit 2 (SPC2) from Saccharomyces cerevisiae (strain ATCC 204508 / S288c) (Baker's yeast).